The sequence spans 122 residues: Large ribosomal subunit protein bL17 (122 aa).

It belongs to the bacterial ribosomal protein bL17 family. In terms of assembly, part of the 50S ribosomal subunit. Contacts protein L32.

This chain is Large ribosomal subunit protein bL17, found in Staphylococcus aureus (strain Mu3 / ATCC 700698).